Reading from the N-terminus, the 414-residue chain is Gamma-glutamyl phosphate reductase (414 aa).

It belongs to the gamma-glutamyl phosphate reductase family.

It is found in the cytoplasm. The enzyme catalyses L-glutamate 5-semialdehyde + phosphate + NADP(+) = L-glutamyl 5-phosphate + NADPH + H(+). It participates in amino-acid biosynthesis; L-proline biosynthesis; L-glutamate 5-semialdehyde from L-glutamate: step 2/2. In terms of biological role, catalyzes the NADPH-dependent reduction of L-glutamate 5-phosphate into L-glutamate 5-semialdehyde and phosphate. The product spontaneously undergoes cyclization to form 1-pyrroline-5-carboxylate. This is Gamma-glutamyl phosphate reductase from Kosmotoga olearia (strain ATCC BAA-1733 / DSM 21960 / TBF 19.5.1).